The following is a 327-amino-acid chain: Phenylalanine--tRNA ligase alpha subunit (327 aa).

Residue Glu-252 participates in Mg(2+) binding.

Belongs to the class-II aminoacyl-tRNA synthetase family. Phe-tRNA synthetase alpha subunit type 1 subfamily. As to quaternary structure, tetramer of two alpha and two beta subunits. Mg(2+) is required as a cofactor.

It localises to the cytoplasm. The catalysed reaction is tRNA(Phe) + L-phenylalanine + ATP = L-phenylalanyl-tRNA(Phe) + AMP + diphosphate + H(+). The sequence is that of Phenylalanine--tRNA ligase alpha subunit from Pectobacterium carotovorum subsp. carotovorum (strain PC1).